Here is a 747-residue protein sequence, read N- to C-terminus: Phosphoribosylformylglycinamidine synthase subunit PurL (747 aa).

Histidine 46 is a catalytic residue. Tyrosine 49 and lysine 88 together coordinate ATP. Glutamate 90 serves as a coordination point for Mg(2+). Residues serine 91–histidine 94 and arginine 113 contribute to the substrate site. The Proton acceptor role is filled by histidine 92. Aspartate 114 contacts Mg(2+). Glutamine 237 is a binding site for substrate. Aspartate 265 serves as a coordination point for Mg(2+). Glutamate 309 to glutamine 311 serves as a coordination point for substrate. The ATP site is built by aspartate 493 and glycine 530. Mg(2+) is bound at residue asparagine 531. Serine 533 provides a ligand contact to substrate.

This sequence belongs to the FGAMS family. In terms of assembly, monomer. Part of the FGAM synthase complex composed of 1 PurL, 1 PurQ and 2 PurS subunits.

The protein localises to the cytoplasm. It carries out the reaction N(2)-formyl-N(1)-(5-phospho-beta-D-ribosyl)glycinamide + L-glutamine + ATP + H2O = 2-formamido-N(1)-(5-O-phospho-beta-D-ribosyl)acetamidine + L-glutamate + ADP + phosphate + H(+). Its pathway is purine metabolism; IMP biosynthesis via de novo pathway; 5-amino-1-(5-phospho-D-ribosyl)imidazole from N(2)-formyl-N(1)-(5-phospho-D-ribosyl)glycinamide: step 1/2. Part of the phosphoribosylformylglycinamidine synthase complex involved in the purines biosynthetic pathway. Catalyzes the ATP-dependent conversion of formylglycinamide ribonucleotide (FGAR) and glutamine to yield formylglycinamidine ribonucleotide (FGAM) and glutamate. The FGAM synthase complex is composed of three subunits. PurQ produces an ammonia molecule by converting glutamine to glutamate. PurL transfers the ammonia molecule to FGAR to form FGAM in an ATP-dependent manner. PurS interacts with PurQ and PurL and is thought to assist in the transfer of the ammonia molecule from PurQ to PurL. This is Phosphoribosylformylglycinamidine synthase subunit PurL from Deinococcus radiodurans (strain ATCC 13939 / DSM 20539 / JCM 16871 / CCUG 27074 / LMG 4051 / NBRC 15346 / NCIMB 9279 / VKM B-1422 / R1).